The primary structure comprises 159 residues: Protein-export protein SecB (159 aa).

The protein belongs to the SecB family. In terms of assembly, homotetramer, a dimer of dimers. One homotetramer interacts with 1 SecA dimer.

It is found in the cytoplasm. Functionally, one of the proteins required for the normal export of preproteins out of the cell cytoplasm. It is a molecular chaperone that binds to a subset of precursor proteins, maintaining them in a translocation-competent state. It also specifically binds to its receptor SecA. This Marinomonas sp. (strain MWYL1) protein is Protein-export protein SecB.